Here is a 111-residue protein sequence, read N- to C-terminus: Cell division protein FtsB (111 aa).

Residues 1 to 3 are Cytoplasmic-facing; sequence MRL. A helical transmembrane segment spans residues 4–21; that stretch reads ITLFLLLLLLAIQYPLWL. At 22–111 the chain is on the periplasmic side; that stretch reads GKGGWLRVWD…PPPAGQQAHH (90 aa). Positions 31–64 form a coiled coil; the sequence is DMQKQVTAQNQRNAELKQRNTKLEGEVKDLKEGT. The segment at 89 to 111 is disordered; it reads APAPKTSETPLPPPPPAGQQAHH.

This sequence belongs to the FtsB family. Part of a complex composed of FtsB, FtsL and FtsQ.

It localises to the cell inner membrane. Functionally, essential cell division protein. May link together the upstream cell division proteins, which are predominantly cytoplasmic, with the downstream cell division proteins, which are predominantly periplasmic. The chain is Cell division protein FtsB from Ralstonia pickettii (strain 12J).